The following is a 379-amino-acid chain: Glutamate 5-kinase (379 aa).

ATP is bound at residue lysine 15. Serine 54, aspartate 144, and asparagine 156 together coordinate substrate. 176-177 (TD) is an ATP binding site. The 79-residue stretch at 282–360 (KGVILVDAGA…GEIERALGYK (79 aa)) folds into the PUA domain.

Belongs to the glutamate 5-kinase family.

The protein localises to the cytoplasm. It carries out the reaction L-glutamate + ATP = L-glutamyl 5-phosphate + ADP. It functions in the pathway amino-acid biosynthesis; L-proline biosynthesis; L-glutamate 5-semialdehyde from L-glutamate: step 1/2. Catalyzes the transfer of a phosphate group to glutamate to form L-glutamate 5-phosphate. This Anaeromyxobacter dehalogenans (strain 2CP-C) protein is Glutamate 5-kinase.